The following is an 83-amino-acid chain: ATP synthase subunit c (83 aa).

2 helical membrane passes run 10 to 30 (IAVA…FGLL) and 52 to 72 (MFIV…IALF).

Belongs to the ATPase C chain family. As to quaternary structure, F-type ATPases have 2 components, F(1) - the catalytic core - and F(0) - the membrane proton channel. F(1) has five subunits: alpha(3), beta(3), gamma(1), delta(1), epsilon(1). F(0) has three main subunits: a(1), b(2) and c(10-14). The alpha and beta chains form an alternating ring which encloses part of the gamma chain. F(1) is attached to F(0) by a central stalk formed by the gamma and epsilon chains, while a peripheral stalk is formed by the delta and b chains.

The protein localises to the cell inner membrane. Its function is as follows. F(1)F(0) ATP synthase produces ATP from ADP in the presence of a proton or sodium gradient. F-type ATPases consist of two structural domains, F(1) containing the extramembraneous catalytic core and F(0) containing the membrane proton channel, linked together by a central stalk and a peripheral stalk. During catalysis, ATP synthesis in the catalytic domain of F(1) is coupled via a rotary mechanism of the central stalk subunits to proton translocation. Key component of the F(0) channel; it plays a direct role in translocation across the membrane. A homomeric c-ring of between 10-14 subunits forms the central stalk rotor element with the F(1) delta and epsilon subunits. This is ATP synthase subunit c from Shewanella baltica (strain OS223).